Here is a 341-residue protein sequence, read N- to C-terminus: Malate dehydrogenase 1, mitochondrial (341 aa).

A mitochondrion-targeting transit peptide spans 1–22; the sequence is MFRSMLVRSSASAKQAVIRRSF. Residues 36–42 and D62 each bind NAD(+); that span reads GAAGGIG. R109 and R115 together coordinate substrate. Residues N122 and 145–147 each bind NAD(+); that span reads ISN. Residues N147 and R181 each coordinate substrate. The active-site Proton acceptor is the H205. M256 is a binding site for NAD(+).

This sequence belongs to the LDH/MDH superfamily. MDH type 1 family. As to quaternary structure, homodimer. In terms of processing, forms intramolecular disulfide bonds. As to expression, expressed in rosette leaves.

It localises to the mitochondrion matrix. It carries out the reaction (S)-malate + NAD(+) = oxaloacetate + NADH + H(+). Negatively regulated by ATP. Not redox-regulated. The formation of intramolecular disulfide bonds does not alter enzymatic activity. Catalyzes a reversible NAD-dependent dehydrogenase reaction involved in central metabolism and redox homeostasis between organelle compartments. Required for carbon dioxide and energy partitioning in leaves. May limit photorespiration during the dark phase. Its activity is essential to shuttle reductants out from the mitochondria to support the photorespiratory flux. Can convert 2-oxoglutarate to (S)-2-hydroxyglutarate in vitro. The sequence is that of Malate dehydrogenase 1, mitochondrial from Arabidopsis thaliana (Mouse-ear cress).